The primary structure comprises 126 residues: Glycerol dehydrogenase small subunit (126 aa).

4 helical membrane passes run 13 to 33 (WLTLVLGVVIILVGLFFVIAG), 41 to 61 (GSVYYVICGIPLVAGGVFMLM), 67 to 87 (AFLYLGALAYTWVWSLWEVGF), and 92 to 112 (LLPRDFGPTLLGILVALTIPV).

The protein resides in the cell membrane. It catalyses the reaction glycerol + A = dihydroxyacetone + AH2. Its function is as follows. Catalyzes the oxidation of glycerol to glycerone. Also acts, more slowly, on a number of other polyols including D-sorbitol, D-arabinitol, D-mannitol, meso-erythritol, adonitol and propylene glycol. In Gluconobacter oxydans (strain 621H) (Gluconobacter suboxydans), this protein is Glycerol dehydrogenase small subunit (sldB).